Consider the following 369-residue polypeptide: Cobalt-precorrin-5B C(1)-methyltransferase (369 aa).

This sequence belongs to the CbiD family.

The catalysed reaction is Co-precorrin-5B + S-adenosyl-L-methionine = Co-precorrin-6A + S-adenosyl-L-homocysteine. The protein operates within cofactor biosynthesis; adenosylcobalamin biosynthesis; cob(II)yrinate a,c-diamide from sirohydrochlorin (anaerobic route): step 6/10. Its function is as follows. Catalyzes the methylation of C-1 in cobalt-precorrin-5B to form cobalt-precorrin-6A. In Geobacter metallireducens (strain ATCC 53774 / DSM 7210 / GS-15), this protein is Cobalt-precorrin-5B C(1)-methyltransferase.